The sequence spans 54 residues: Rubredoxin (54 aa).

Methionine 1 is subject to N-formylmethionine. A Rubredoxin-like domain is found at methionine 1–glutamate 54. The Fe cation site is built by cysteine 6, cysteine 9, cysteine 39, and cysteine 42.

The protein belongs to the rubredoxin family. Fe(3+) is required as a cofactor.

Rubredoxin is a small nonheme, iron protein lacking acid-labile sulfide. Its single Fe, chelated to 4 Cys, functions as an electron acceptor and may also stabilize the conformation of the molecule. The polypeptide is Rubredoxin (Clostridium pasteurianum).